Reading from the N-terminus, the 337-residue chain is Glyceraldehyde-3-phosphate dehydrogenase (337 aa).

NADP(+) is bound by residues T11–V12, T34–R35, and G110. S139–N141 is a binding site for D-glyceraldehyde 3-phosphate. The active-site Nucleophile is the C140. D171 is a binding site for NADP(+). H194–G195 lines the D-glyceraldehyde 3-phosphate pocket. Residue Q300 coordinates NADP(+).

This sequence belongs to the glyceraldehyde-3-phosphate dehydrogenase family. In terms of assembly, homotetramer.

It is found in the cytoplasm. The catalysed reaction is D-glyceraldehyde 3-phosphate + phosphate + NADP(+) = (2R)-3-phospho-glyceroyl phosphate + NADPH + H(+). The enzyme catalyses D-glyceraldehyde 3-phosphate + phosphate + NAD(+) = (2R)-3-phospho-glyceroyl phosphate + NADH + H(+). It functions in the pathway carbohydrate degradation; glycolysis; pyruvate from D-glyceraldehyde 3-phosphate: step 1/5. Functionally, exhibits a dual-cofactor specificity, with a marked preference for NADP(+) over NAD(+). The protein is Glyceraldehyde-3-phosphate dehydrogenase (gap) of Methanothermus fervidus.